The following is a 466-amino-acid chain: MMMLNPSNGGIEGEKMKKKAKVVVIMGPTGSGKSKLAVDLASHFPVEIINADAMQIYSGLDVLTNKVTVDEQKGVPHHLLGTVSSDMEFTARDFRDFTVPLIEEIVSRNHIPVLVGGTHYYIQAVVSKFLLDDAAEDTEECCADVASVVDQDMVVESVFGRDDLSHGYELLKELDPVAANRIHPNNHRKINQYLSLHASRGVLPSKLYQGKTAENWGCINASRFDYCLICMDAETAVLDRYVEQRVDAMVDAGLLDEVYDIYKPGADYTRGLRQSIGVREFEDFLKIHLSETCAGHLTSLSNDDKVMKENLRKILNFPKDDKLRIMLEEAIDRVKLNTRRLLRRQKRRVSRLETVFGWNIHYIDATEYILSKSEESWNAQVVKPASEIIRCFLETETESGRDPTSGKSIERDLWTQYVCEACGNKILRGRHEWEHHKQGRTHRKRTTRHKNSQTYKNREVQEAEVN.

Residue 27-34 (GPTGSGKS) participates in ATP binding. Residue 29-34 (TGSGKS) participates in substrate binding. Residues 52 to 55 (DAMQ) are interaction with substrate tRNA. The disordered stretch occupies residues 433 to 466 (WEHHKQGRTHRKRTTRHKNSQTYKNREVQEAEVN). Basic residues predominate over residues 437 to 451 (KQGRTHRKRTTRHKN). Positions 456 to 466 (KNREVQEAEVN) are enriched in basic and acidic residues.

This sequence belongs to the IPP transferase family. Mg(2+) serves as cofactor. In terms of tissue distribution, expressed ubiquitously, with highest expression in proliferating tissues.

It is found in the cytoplasm. The enzyme catalyses adenosine(37) in tRNA + dimethylallyl diphosphate = N(6)-dimethylallyladenosine(37) in tRNA + diphosphate. Functionally, catalyzes the transfer of a dimethylallyl group onto the adenine at position 37 in tRNAs that read codons beginning with uridine, leading to the formation of N6-(dimethylallyl)adenosine (i(6)A). Involved in the cis-type cytokinin biosynthesis. This Arabidopsis thaliana (Mouse-ear cress) protein is tRNA dimethylallyltransferase 2 (IPT2).